We begin with the raw amino-acid sequence, 313 residues long: Isoaspartyl peptidase (313 aa).

Residue Thr-179 is the Nucleophile of the active site. Substrate is bound by residues 207-210 and 230-233; these read RVGD and TGTG.

This sequence belongs to the Ntn-hydrolase family. Heterotetramer of two alpha and two beta chains arranged as a dimer of alpha/beta heterodimers. Post-translationally, autocleaved. Generates the alpha and beta subunits. The beta subunit is thought to be responsible for the nucleophile hydrolase activity.

It carries out the reaction Cleavage of a beta-linked Asp residue from the N-terminus of a polypeptide.. Its function is as follows. Degrades proteins damaged by L-isoaspartyl residue formation (also known as beta-Asp residues). Degrades L-isoaspartyl-containing di- and tripeptides. Acts best on iso-Asp-Leu, followed by iso-Asp-Ala, -His and to a lesser extent iso-Asp-Lys, -Phe and iso-Asp-Leu-Ala. Does not act on internal iso-Asp bonds (Als-iso-Asp-Leu-Ala). Does not act on alpha-Asp bonds. Has poor L-asparaginase activity. This chain is Isoaspartyl peptidase (iaaA), found in Salmonella typhimurium (strain LT2 / SGSC1412 / ATCC 700720).